The primary structure comprises 528 residues: Glucose-6-phosphate isomerase (528 aa).

The active-site Proton donor is the E322. Catalysis depends on residues H351 and K455.

The protein belongs to the GPI family.

It is found in the cytoplasm. It catalyses the reaction alpha-D-glucose 6-phosphate = beta-D-fructose 6-phosphate. It functions in the pathway carbohydrate biosynthesis; gluconeogenesis. Its pathway is carbohydrate degradation; glycolysis; D-glyceraldehyde 3-phosphate and glycerone phosphate from D-glucose: step 2/4. Functionally, catalyzes the reversible isomerization of glucose-6-phosphate to fructose-6-phosphate. The chain is Glucose-6-phosphate isomerase from Nostoc sp. (strain PCC 7120 / SAG 25.82 / UTEX 2576).